Reading from the N-terminus, the 460-residue chain is Nitrilase and fragile histidine triad fusion protein NitFhit (460 aa).

A CN hydrolase domain is found at Ala33–Leu279. Catalysis depends on residues Glu72, Lys142, and Cys183. One can recognise an HIT domain in the interval Asp315 to His422. The Histidine triad motif motif lies at His407–His411. Catalysis depends on His409, which acts as the Tele-AMP-histidine intermediate.

The protein in the N-terminal section; belongs to the UPF0012 family. In terms of assembly, homotetramer. Mn(2+) is required as a cofactor.

The enzyme catalyses P(1),P(3)-bis(5'-adenosyl) triphosphate + H2O = AMP + ADP + 2 H(+). Functionally, cleaves A-5'-PPP-5'A to yield AMP and ADP. The chain is Nitrilase and fragile histidine triad fusion protein NitFhit from Drosophila melanogaster (Fruit fly).